A 60-amino-acid chain; its full sequence is Large ribosomal subunit protein uL30 (60 aa).

This sequence belongs to the universal ribosomal protein uL30 family. In terms of assembly, part of the 50S ribosomal subunit.

The polypeptide is Large ribosomal subunit protein uL30 (Bacillus anthracis (strain A0248)).